The following is a 785-amino-acid chain: Semaphorin-3F (785 aa).

Residues methionine 1–proline 18 form the signal peptide. The 515-residue stretch at arginine 31–leucine 545 folds into the Sema domain. Asparagine 53 carries an N-linked (GlcNAc...) asparagine glycan. Cysteine 104 and cysteine 115 form a disulfide bridge. Asparagine 126 carries N-linked (GlcNAc...) asparagine glycosylation. 4 cysteine pairs are disulfide-bonded: cysteine 133–cysteine 142, cysteine 300–cysteine 412, cysteine 324–cysteine 372, and cysteine 548–cysteine 566. The tract at residues arginine 583–asparagine 602 is disordered. The 91-residue stretch at alanine 605–histidine 695 folds into the Ig-like C2-type domain. Cysteine 678 and cysteine 746 are disulfide-bonded. Residues valine 753–threonine 785 form a disordered region. Residues proline 775 to threonine 785 are compositionally biased toward basic residues.

It belongs to the semaphorin family. In terms of tissue distribution, expressed ubiquitously in adulthood. During embryogenesis, expressed in subregions of the central nervous system and various other tissues like skin, kidney, lung and intestine.

The protein localises to the secreted. In Mus musculus (Mouse), this protein is Semaphorin-3F (Sema3f).